The following is a 170-amino-acid chain: Extracellular globin-3 (170 aa).

An N-terminal signal peptide occupies residues 1 to 17; it reads MLRQLLVLVGLAVVCLA. The 147-residue stretch at 23-169 folds into the Globin domain; that stretch reads CCSEEDHRIV…ILTKISSRLN (147 aa). A disulfide bond links cysteine 24 and cysteine 156. A heme b-binding site is contributed by histidine 119.

This sequence belongs to the globin family. As to quaternary structure, the extracellular hemoglobin of the earthworm consists of 12 subunits that have a hexagonal bilayer structure with a molecular weight near 3.8 million. Each one-twelfth subunit is composed primarily of disulfide linked trimers (chains A, B, and C) and monomers (chain D).

It localises to the secreted. This is Extracellular globin-3 from Lumbricus terrestris (Common earthworm).